Here is a 109-residue protein sequence, read N- to C-terminus: MYEEFPDVITFQSYVEQSNGEGGKTYKWVDEFTAAAHVQPISQEEYYKAQQLQTPIGYNIYTPYDDRIDKKMRVIYRGKIVTFIGDPVDLSGLQEITRIKGKEDGAYVG.

Belongs to the Caudoviricetes gp7/gp16 head completion protein family. As to quaternary structure, homododecamer. Interacts with the connector protein gp15. Interacts with the head-tail joining protein gp17.

The protein resides in the virion. Its function is as follows. Functions as a stopper that is part of the head-tail connector and that locks the viral DNA in the capsid. Following tail attachment to the entry receptor, seems to open by a diaphragm-like motion, allowing the genome to exit the capsid through the tail tube to the host cell. During assembly, functions as a docking platform which the preassembled tail tapered by the head-tail joining protein gp17 can bind to. This Bacillus subtilis (Bacteriophage SPP1) protein is Head completion protein gp16 (16).